A 117-amino-acid chain; its full sequence is UPF0295 protein GTNG_0491 (117 aa).

The next 2 membrane-spanning stretches (helical) occupy residues 12–32 (IRTF…LGLF) and 42–62 (LFMV…FWIG).

It belongs to the UPF0295 family.

The protein localises to the cell membrane. The polypeptide is UPF0295 protein GTNG_0491 (Geobacillus thermodenitrificans (strain NG80-2)).